The primary structure comprises 556 residues: Peptide chain release factor 3 (556 aa).

Positions 28–297 constitute a tr-type G domain; sequence QQRRNFAIIS…AFLDYALKPG (270 aa). GTP-binding positions include 37–44, 105–109, and 159–162; these read SHPDAGKT, DTPGH, and NKMD.

The protein belongs to the TRAFAC class translation factor GTPase superfamily. Classic translation factor GTPase family. PrfC subfamily.

Its subcellular location is the cytoplasm. Its function is as follows. Increases the formation of ribosomal termination complexes and stimulates activities of RF-1 and RF-2. It binds guanine nucleotides and has strong preference for UGA stop codons. It may interact directly with the ribosome. The stimulation of RF-1 and RF-2 is significantly reduced by GTP and GDP, but not by GMP. In Synechococcus sp. (strain ATCC 27144 / PCC 6301 / SAUG 1402/1) (Anacystis nidulans), this protein is Peptide chain release factor 3.